The following is a 312-amino-acid chain: HPr kinase/phosphorylase (312 aa).

Residues H141 and K162 contribute to the active site. 156 to 163 (GDSGIGKS) provides a ligand contact to ATP. S163 serves as a coordination point for Mg(2+). D180 serves as the catalytic Proton acceptor; for phosphorylation activity. Proton donor; for dephosphorylation activity. Residues 204-213 (LEIRGVGIID) form an important for the catalytic mechanism of both phosphorylation and dephosphorylation region. E205 contacts Mg(2+). Residue R246 is part of the active site. An important for the catalytic mechanism of dephosphorylation region spans residues 267–272 (PVRVGR).

It belongs to the HPrK/P family. As to quaternary structure, homohexamer. Requires Mg(2+) as cofactor.

It catalyses the reaction [HPr protein]-L-serine + ATP = [HPr protein]-O-phospho-L-serine + ADP + H(+). The catalysed reaction is [HPr protein]-O-phospho-L-serine + phosphate + H(+) = [HPr protein]-L-serine + diphosphate. Catalyzes the ATP- as well as the pyrophosphate-dependent phosphorylation of a specific serine residue in HPr, a phosphocarrier protein of the phosphoenolpyruvate-dependent sugar phosphotransferase system (PTS). HprK/P also catalyzes the pyrophosphate-producing, inorganic phosphate-dependent dephosphorylation (phosphorolysis) of seryl-phosphorylated HPr (P-Ser-HPr). The two antagonistic activities of HprK/P are regulated by several intracellular metabolites, which change their concentration in response to the absence or presence of rapidly metabolisable carbon sources (glucose, fructose, etc.) in the growth medium. Therefore, by controlling the phosphorylation state of HPr, HPrK/P is a sensor enzyme that plays a major role in the regulation of carbon metabolism and sugar transport: it mediates carbon catabolite repression (CCR), and regulates PTS-catalyzed carbohydrate uptake and inducer exclusion. The protein is HPr kinase/phosphorylase of Pediococcus pentosaceus (strain ATCC 25745 / CCUG 21536 / LMG 10740 / 183-1w).